A 100-amino-acid chain; its full sequence is MSEKTLTRMDLSEAVFREVGLSRNESAQLVETVLQHMSDALVRGETVKISSFGTFSVRDKTSRMGRNPKTGEEVPISPRRVLSFRPSHLMKDRVAERNAK.

Belongs to the bacterial histone-like protein family. Heterodimer of an alpha and a beta chain.

Functionally, this protein is one of the two subunits of integration host factor, a specific DNA-binding protein that functions in genetic recombination as well as in transcriptional and translational control. Involved in hydrogenase gene expression. The polypeptide is Integration host factor subunit alpha (ihfA) (Rhodobacter capsulatus (Rhodopseudomonas capsulata)).